Here is a 235-residue protein sequence, read N- to C-terminus: Phosphoribosylformylglycinamidine synthase subunit PurQ (235 aa).

A Glutamine amidotransferase type-1 domain is found at 5–235 (FGVVVFPGSN…LLNHVSIVAA (231 aa)). Cys88 (nucleophile) is an active-site residue. Catalysis depends on residues His205 and Glu207.

In terms of assembly, part of the FGAM synthase complex composed of 1 PurL, 1 PurQ and 2 PurS subunits.

It localises to the cytoplasm. The enzyme catalyses N(2)-formyl-N(1)-(5-phospho-beta-D-ribosyl)glycinamide + L-glutamine + ATP + H2O = 2-formamido-N(1)-(5-O-phospho-beta-D-ribosyl)acetamidine + L-glutamate + ADP + phosphate + H(+). It carries out the reaction L-glutamine + H2O = L-glutamate + NH4(+). It participates in purine metabolism; IMP biosynthesis via de novo pathway; 5-amino-1-(5-phospho-D-ribosyl)imidazole from N(2)-formyl-N(1)-(5-phospho-D-ribosyl)glycinamide: step 1/2. In terms of biological role, part of the phosphoribosylformylglycinamidine synthase complex involved in the purines biosynthetic pathway. Catalyzes the ATP-dependent conversion of formylglycinamide ribonucleotide (FGAR) and glutamine to yield formylglycinamidine ribonucleotide (FGAM) and glutamate. The FGAM synthase complex is composed of three subunits. PurQ produces an ammonia molecule by converting glutamine to glutamate. PurL transfers the ammonia molecule to FGAR to form FGAM in an ATP-dependent manner. PurS interacts with PurQ and PurL and is thought to assist in the transfer of the ammonia molecule from PurQ to PurL. The polypeptide is Phosphoribosylformylglycinamidine synthase subunit PurQ (Salinibacter ruber (strain DSM 13855 / M31)).